The chain runs to 71 residues: Cytochrome c oxidase subunit 8C, mitochondrial (71 aa).

Residues 1-28 (MAHLPRVCPFIRRLRVALLCLRPGHRFA) constitute a mitochondrion transit peptide. Over 29 to 39 (HSEPQRQRPAS) the chain is Mitochondrial matrix. A helical transmembrane segment spans residues 40–63 (ALEMAVGIVVIFSAFLTPSAYVLS). Residues 64 to 71 (NLSQFRRE) are Mitochondrial intermembrane-facing.

This sequence belongs to the cytochrome c oxidase VIII family. In terms of assembly, component of the cytochrome c oxidase (complex IV, CIV), a multisubunit enzyme composed of 14 subunits. The complex is composed of a catalytic core of 3 subunits MT-CO1, MT-CO2 and MT-CO3, encoded in the mitochondrial DNA, and 11 supernumerary subunits COX4I, COX5A, COX5B, COX6A, COX6B, COX6C, COX7A, COX7B, COX7C, COX8 and NDUFA4, which are encoded in the nuclear genome. The complex exists as a monomer or a dimer and forms supercomplexes (SCs) in the inner mitochondrial membrane with NADH-ubiquinone oxidoreductase (complex I, CI) and ubiquinol-cytochrome c oxidoreductase (cytochrome b-c1 complex, complex III, CIII), resulting in different assemblies (supercomplex SCI(1)III(2)IV(1) and megacomplex MCI(2)III(2)IV(2)).

The protein localises to the mitochondrion inner membrane. The protein operates within energy metabolism; oxidative phosphorylation. In terms of biological role, component of the cytochrome c oxidase, the last enzyme in the mitochondrial electron transport chain which drives oxidative phosphorylation. The respiratory chain contains 3 multisubunit complexes succinate dehydrogenase (complex II, CII), ubiquinol-cytochrome c oxidoreductase (cytochrome b-c1 complex, complex III, CIII) and cytochrome c oxidase (complex IV, CIV), that cooperate to transfer electrons derived from NADH and succinate to molecular oxygen, creating an electrochemical gradient over the inner membrane that drives transmembrane transport and the ATP synthase. Cytochrome c oxidase is the component of the respiratory chain that catalyzes the reduction of oxygen to water. Electrons originating from reduced cytochrome c in the intermembrane space (IMS) are transferred via the dinuclear copper A center (CU(A)) of subunit 2 and heme A of subunit 1 to the active site in subunit 1, a binuclear center (BNC) formed by heme A3 and copper B (CU(B)). The BNC reduces molecular oxygen to 2 water molecules using 4 electrons from cytochrome c in the IMS and 4 protons from the mitochondrial matrix. This is Cytochrome c oxidase subunit 8C, mitochondrial (COX8C) from Eulemur fulvus fulvus (Brown lemur).